We begin with the raw amino-acid sequence, 352 residues long: tRNA (guanine-N(1)-)-methyltransferase (352 aa).

S-adenosyl-L-methionine-binding positions include G109 and 129–134; that span reads IGDYVL.

The protein belongs to the RNA methyltransferase TrmD family. As to quaternary structure, homodimer.

The protein localises to the cytoplasm. The catalysed reaction is guanosine(37) in tRNA + S-adenosyl-L-methionine = N(1)-methylguanosine(37) in tRNA + S-adenosyl-L-homocysteine + H(+). Functionally, specifically methylates guanosine-37 in various tRNAs. The polypeptide is tRNA (guanine-N(1)-)-methyltransferase (Chlamydia trachomatis serovar A (strain ATCC VR-571B / DSM 19440 / HAR-13)).